A 51-amino-acid polypeptide reads, in one-letter code: ATP synthase F(1) complex subunit epsilon, mitochondrial (51 aa).

3 positions are modified to N6-acetyllysine; alternate: lysine 21, lysine 32, and lysine 37. N6-succinyllysine; alternate occurs at positions 21, 32, and 37. At lysine 44 the chain carries N6-acetyllysine.

The protein belongs to the eukaryotic ATPase epsilon family. In terms of assembly, component of the ATP synthase complex composed at least of ATP5F1A/subunit alpha, ATP5F1B/subunit beta, ATP5MC1/subunit c (homooctomer), MT-ATP6/subunit a, MT-ATP8/subunit 8, ATP5ME/subunit e, ATP5MF/subunit f, ATP5MG/subunit g, ATP5MK/subunit k, ATP5MJ/subunit j, ATP5F1C/subunit gamma, ATP5F1D/subunit delta, ATP5F1E/subunit epsilon, ATP5PF/subunit F6, ATP5PB/subunit b, ATP5PD/subunit d, ATP5PO/subunit OSCP. ATP synthase complex consists of a soluble F(1) head domain (subunits alpha(3) and beta(3)) - the catalytic core - and a membrane F(0) domain - the membrane proton channel (subunits c, a, 8, e, f, g, k and j). These two domains are linked by a central stalk (subunits gamma, delta, and epsilon) rotating inside the F1 region and a stationary peripheral stalk (subunits F6, b, d, and OSCP).

The protein localises to the mitochondrion. Its subcellular location is the mitochondrion inner membrane. In terms of biological role, subunit epsilon, of the mitochondrial membrane ATP synthase complex (F(1)F(0) ATP synthase or Complex V) that produces ATP from ADP in the presence of a proton gradient across the membrane which is generated by electron transport complexes of the respiratory chain. ATP synthase complex consist of a soluble F(1) head domain - the catalytic core - and a membrane F(1) domain - the membrane proton channel. These two domains are linked by a central stalk rotating inside the F(1) region and a stationary peripheral stalk. During catalysis, ATP synthesis in the catalytic domain of F(1) is coupled via a rotary mechanism of the central stalk subunits to proton translocation. In vivo, can only synthesize ATP although its ATP hydrolase activity can be activated artificially in vitro. May be essential for the assembly of F(1) and may play an important role in the incorporation of the hydrophobic subunit c into the F(1)-c oligomer rotor of the mitochondrial ATP synthase complex. The sequence is that of ATP synthase F(1) complex subunit epsilon, mitochondrial from Rattus norvegicus (Rat).